We begin with the raw amino-acid sequence, 676 residues long: Basic proline-rich protein (676 aa).

Residues 1 to 16 (MLPILLSVALLALSSA) form the signal peptide. A phosphoserine mark is found at S28 and S30. The interval 29–676 (NSAEKFLRPP…PRPPPGPPPQ (648 aa)) is disordered. Composition is skewed to pro residues over residues 36–50 (RPPP…PPPE), 71–424 (GPAP…PPAD), and 442–676 (PPPA…PPPQ). Residues 409–457 (APPGARPPPPPPPPADEPQQGPAPSGDKPKKKPPPPAGPPPPGPPSPGP) constitute a propeptide that is removed on maturation.

As to expression, acinar cells and secretory granules of the parotid gland.

Its subcellular location is the secreted. In terms of biological role, the parotid hormone stimulates dentinal fluid transport in teeth. In Sus scrofa (Pig), this protein is Basic proline-rich protein.